A 246-amino-acid chain; its full sequence is 23S rRNA (guanosine-2'-O-)-methyltransferase RlmB (246 aa).

S-adenosyl-L-methionine is bound by residues Gly197, Ile217, and Leu226.

The protein belongs to the class IV-like SAM-binding methyltransferase superfamily. RNA methyltransferase TrmH family. RlmB subfamily.

The protein localises to the cytoplasm. The enzyme catalyses guanosine(2251) in 23S rRNA + S-adenosyl-L-methionine = 2'-O-methylguanosine(2251) in 23S rRNA + S-adenosyl-L-homocysteine + H(+). Its function is as follows. Specifically methylates the ribose of guanosine 2251 in 23S rRNA. This chain is 23S rRNA (guanosine-2'-O-)-methyltransferase RlmB, found in Haemophilus ducreyi (strain 35000HP / ATCC 700724).